Reading from the N-terminus, the 546-residue chain is Chaperonin GroEL (546 aa).

ATP contacts are provided by residues 29 to 32 (TLGP), Lys50, 86 to 90 (DGTTT), Gly415, and Asp495.

This sequence belongs to the chaperonin (HSP60) family. As to quaternary structure, forms a cylinder of 14 subunits composed of two heptameric rings stacked back-to-back. Interacts with the co-chaperonin GroES.

It is found in the cytoplasm. It carries out the reaction ATP + H2O + a folded polypeptide = ADP + phosphate + an unfolded polypeptide.. Together with its co-chaperonin GroES, plays an essential role in assisting protein folding. The GroEL-GroES system forms a nano-cage that allows encapsulation of the non-native substrate proteins and provides a physical environment optimized to promote and accelerate protein folding. This chain is Chaperonin GroEL, found in Parabacteroides distasonis (strain ATCC 8503 / DSM 20701 / CIP 104284 / JCM 5825 / NCTC 11152).